Reading from the N-terminus, the 509-residue chain is MLASACTHSWRTGRFLNRIIKSSVQTLTAAALIANLSACSRPTTLEKIEQEGALHVITRNAPTTYYEDRDGPAGFEYELAKKFSEYLGVELRLRVANDLDEAYTVLEQNYTNLAAVGLSRLAASAQSPSLRFSSEYLEIQPLVLYRNGSAKPKQLDDLIGGKLIIPAQTAQAEFLRQVKDSRLPDMDWLEAADMETSEIMRLIEEGEYEYAIVNSREYEIHKAMFPRAREAFSLMEPLQISWIFPPGEDMSLIQKADEFIKQIKDDGTLIYLQERYFGHVNQLNYVGARTYISHIKDRLPKFEPTFKQAAEKFEVDWRLLASIGYQESHWRPYATSPTGVRGLMMLTLPTAKEMNVKNRLNPEQSIFGGAGYFSRIKQRISERITEPDRTWMALAAYNVGLGHLEDARALAKAQGLDQDKWIDVKQALPLLQQKKWYVKTRYGYARGWEPVHYVQNIRRYYDVLVWMTQPSAEDGSVAQNEDAPTTGADGTTEETPAIPAPFRVTPPML.

An N-terminal signal peptide occupies residues 1–40; the sequence is MLASACTHSWRTGRFLNRIIKSSVQTLTAAALIANLSACS. Residues 41 to 280 form a non-LT domain region; that stretch reads RPTTLEKIEQ…YLQERYFGHV (240 aa). The interval 281 to 509 is LT domain; sequence NQLNYVGART…APFRVTPPML (229 aa). Glu-327 is a catalytic residue. Residues 474 to 500 are disordered; that stretch reads DGSVAQNEDAPTTGADGTTEETPAIPA.

In the N-terminal section; belongs to the bacterial solute-binding protein 3 family. This sequence in the C-terminal section; belongs to the transglycosylase Slt family.

Its subcellular location is the cell outer membrane. The enzyme catalyses Exolytic cleavage of the (1-&gt;4)-beta-glycosidic linkage between N-acetylmuramic acid (MurNAc) and N-acetylglucosamine (GlcNAc) residues in peptidoglycan, from either the reducing or the non-reducing ends of the peptidoglycan chains, with concomitant formation of a 1,6-anhydrobond in the MurNAc residue.. In terms of biological role, murein-degrading enzyme that degrades murein glycan strands and insoluble, high-molecular weight murein sacculi, with the concomitant formation of a 1,6-anhydromuramoyl product. Lytic transglycosylases (LTs) play an integral role in the metabolism of the peptidoglycan (PG) sacculus. Their lytic action creates space within the PG sacculus to allow for its expansion as well as for the insertion of various structures such as secretion systems and flagella. The chain is Membrane-bound lytic murein transglycosylase F from Hahella chejuensis (strain KCTC 2396).